Here is a 135-residue protein sequence, read N- to C-terminus: UPF0102 protein Mkms_2031 (135 aa).

Belongs to the UPF0102 family.

This is UPF0102 protein Mkms_2031 from Mycobacterium sp. (strain KMS).